Here is a 269-residue protein sequence, read N- to C-terminus: Zinc transporter ZupT (269 aa).

A run of 8 helical transmembrane segments spans residues 12–32, 41–61, 75–95, 126–146, 152–172, 187–207, 211–231, and 249–269; these read AFSI…LVMF, LSFG…TEIF, DHAF…IALI, MMAA…TFFA, AVGM…GISI, VWAC…GYLV, FLSP…MVFL, and TVYG…LFHF. Residues asparagine 136 and glutamate 139 each coordinate Fe(2+). The Zn(2+) site is built by glutamate 139 and histidine 164. Fe(2+) contacts are provided by asparagine 165, glutamate 168, and glutamate 197. Residue glutamate 168 participates in Zn(2+) binding.

The protein belongs to the ZIP transporter (TC 2.A.5) family. ZupT subfamily.

Its subcellular location is the cell inner membrane. The enzyme catalyses Zn(2+)(in) = Zn(2+)(out). Functionally, mediates zinc uptake. May also transport other divalent cations. The chain is Zinc transporter ZupT from Neisseria meningitidis serogroup B (strain ATCC BAA-335 / MC58).